The following is a 282-amino-acid chain: Nucleotide-binding protein PXO_02223 (282 aa).

5 to 12 lines the ATP pocket; it reads GLSGSGKS. Position 57-60 (57-60) interacts with GTP; sequence DVRS.

This sequence belongs to the RapZ-like family.

Its function is as follows. Displays ATPase and GTPase activities. The sequence is that of Nucleotide-binding protein PXO_02223 from Xanthomonas oryzae pv. oryzae (strain PXO99A).